Reading from the N-terminus, the 558-residue chain is MAALTRDPQFQKLQQWYREHRSELNLRRLFDANKDRFNHFSLTLNTNHGHILVDYSKNLVTEDVMRMLVDLAKSRGVEAARERMFNGEKINYTEGRAVLHVALRNRSNTPILVDGKDVMPEVNKVLDKMKSFCQRVRSGDWKGYTGKTITDVINIGIGGSDLGPLMVTEALKPYSSGGPRVWYVSNIDGTHIAKTLAQLNPESSLFIIASKTFTTQETITNAETAKEWFLQAAKDPSAVAKHFVALSTNTTKVKEFGIDPQNMFEFWDWVGGRYSLWSAIGLSIALHVGFDNFEQLLSGAHWMDQHFRTTPLEKNAPVLLALLGIWYINCFGCETHAMLPYDQYLHRFAAYFQQGDMESNGKYITKSGTRVDHQTGPIVWGEPGTNGQHAFYQLIHQGTKMIPCDFLIPVQTQHPIRKGLHHKILLANFLAQTEALMRGKSTEEARKELQAAGKSPEDLERLLPHKVFEGNRPTNSIVFTKLTPFMLGALVAMYEHKIFVQGIIWDINSFDQWGVELGKQLAKKIEPELDGSAQVTSHDASTNGLINFIKQQREARVQ.

A2 bears the N-acetylalanine mark. Position 12 is an N6-acetyllysine (K12). K34 is modified (N6-(2-hydroxyisobutyryl)lysine). S107 is subject to Phosphoserine. Residue T109 is modified to Phosphothreonine. Position 142 is an N6-acetyllysine (K142). 159–160 (GS) lines the D-glucose 6-phosphate pocket. At S185 the chain carries Phosphoserine; by CK2. A D-glucose 6-phosphate-binding site is contributed by 210-215 (SKTFTT). T250 is subject to Phosphothreonine. Residues Q354, E358, and H389 each contribute to the D-glucose 6-phosphate site. The active-site Proton donor is the E358. H389 is an active-site residue. K454 carries the N6-acetyllysine; alternate modification. Residue K454 is modified to N6-malonyllysine; alternate. N6-succinyllysine; alternate is present on K454. S455 is modified (phosphoserine). K519 lines the D-glucose 6-phosphate pocket. Residue K519 is part of the active site.

Belongs to the GPI family. In terms of assembly, homodimer; in the catalytically active form. Monomer in the secreted form. In terms of processing, phosphorylation at Ser-185 by CK2 has been shown to decrease enzymatic activity and may contribute to secretion by a non-classical secretory pathway. ISGylated.

It localises to the cytoplasm. It is found in the secreted. The enzyme catalyses alpha-D-glucose 6-phosphate = beta-D-fructose 6-phosphate. It participates in carbohydrate degradation; glycolysis; D-glyceraldehyde 3-phosphate and glycerone phosphate from D-glucose: step 2/4. With respect to regulation, strongly inhibited by erythrose 4-phosphate. Its function is as follows. In the cytoplasm, catalyzes the conversion of glucose-6-phosphate to fructose-6-phosphate, the second step in glycolysis, and the reverse reaction during gluconeogenesis. Besides it's role as a glycolytic enzyme, also acts as a secreted cytokine: acts as an angiogenic factor (AMF) that stimulates endothelial cell motility. Acts as a neurotrophic factor, neuroleukin, for spinal and sensory neurons. It is secreted by lectin-stimulated T-cells and induces immunoglobulin secretion. The protein is Glucose-6-phosphate isomerase of Homo sapiens (Human).